The following is a 216-amino-acid chain: 2-phospho-L-lactate guanylyltransferase (216 aa).

Belongs to the CofC family. Homodimer.

It catalyses the reaction (2S)-2-phospholactate + GTP + H(+) = (2S)-lactyl-2-diphospho-5'-guanosine + diphosphate. Its pathway is cofactor biosynthesis; coenzyme F420 biosynthesis. Guanylyltransferase that catalyzes the activation of (2S)-2-phospholactate (2-PL) as (2S)-lactyl-2-diphospho-5'-guanosine, via the condensation of 2-PL with GTP. It is involved in the biosynthesis of coenzyme F420, a hydride carrier cofactor. This is 2-phospho-L-lactate guanylyltransferase from Methanocaldococcus infernus (strain DSM 11812 / JCM 15783 / ME).